A 582-amino-acid chain; its full sequence is Probable DNA ligase (582 aa).

Position 248 (Glu248) interacts with ATP. The N6-AMP-lysine intermediate role is filled by Lys250. ATP is bound by residues Arg255, Arg270, Glu299, Phe339, Arg416, and Lys422.

Belongs to the ATP-dependent DNA ligase family. Mg(2+) is required as a cofactor.

The catalysed reaction is ATP + (deoxyribonucleotide)n-3'-hydroxyl + 5'-phospho-(deoxyribonucleotide)m = (deoxyribonucleotide)n+m + AMP + diphosphate.. In terms of biological role, DNA ligase that seals nicks in double-stranded DNA during DNA replication, DNA recombination and DNA repair. The sequence is that of Probable DNA ligase from Persephonella marina (strain DSM 14350 / EX-H1).